The sequence spans 627 residues: Carene synthase, chloroplastic (627 aa).

A chloroplast-targeting transit peptide spans 1-36 (MSVISILPLASKSCLYKSLMSSTHELKALCRPIATL). 3 residues coordinate Mg(2+): D378, D382, and D530. The DDXXD motif signature appears at 378-382 (DDMYD).

It belongs to the terpene synthase family. Tpsd subfamily. Requires Mg(2+) as cofactor. It depends on Mn(2+) as a cofactor.

Its subcellular location is the plastid. It is found in the chloroplast. It carries out the reaction (2E)-geranyl diphosphate = (+)-car-3-ene + diphosphate. Its pathway is terpene metabolism; oleoresin biosynthesis. Functionally, terpene synthase (TPS) involved in defensive oleoresin formation in conifers in response to insect attack or other injury. The sequence is that of Carene synthase, chloroplastic (JF67) from Picea abies (Norway spruce).